We begin with the raw amino-acid sequence, 48 residues long: Omega-agatoxin-Aa5a (48 aa).

Intrachain disulfides connect C3–C16, C10–C21, C15–C32, and C23–C30.

This sequence belongs to the neurotoxin 02 (plectoxin) family. In terms of tissue distribution, expressed by the venom gland.

Its subcellular location is the secreted. Its function is as follows. The toxin blocks voltage-gated calcium channels in rat cerebellar granule cells (IC(50)=200 nM). The protein is Omega-agatoxin-Aa5a of Agelenopsis aperta (North American funnel-web spider).